An 872-amino-acid chain; its full sequence is Eukaryotic translation initiation factor 3 subunit C (872 aa).

Positions 1–100 (MSRFFRGGDD…KVKSAKDKRF (100 aa)) are disordered. 2 stretches are compositionally biased toward acidic residues: residues 16 to 59 (SSEE…DEEE) and 72 to 87 (SDDESEEEEEEQSDDE). Residues 88 to 100 (ATTKVKSAKDKRF) show a composition bias toward basic and acidic residues. The PCI domain occupies 613 to 787 (FHMHINLELL…ETVIFRKGVE (175 aa)). Positions 812-872 (TLEQKTQGSA…GGALGNAVRG (61 aa)) are disordered. A compositionally biased stretch (gly residues) spans 831–848 (GGGQRGGGQRGGRGGART).

Belongs to the eIF-3 subunit C family. In terms of assembly, component of the eukaryotic translation initiation factor 3 (eIF-3) complex.

The protein localises to the cytoplasm. Component of the eukaryotic translation initiation factor 3 (eIF-3) complex, which is involved in protein synthesis of a specialized repertoire of mRNAs and, together with other initiation factors, stimulates binding of mRNA and methionyl-tRNAi to the 40S ribosome. The eIF-3 complex specifically targets and initiates translation of a subset of mRNAs involved in cell proliferation. The chain is Eukaryotic translation initiation factor 3 subunit C (nip-1) from Neurospora crassa (strain ATCC 24698 / 74-OR23-1A / CBS 708.71 / DSM 1257 / FGSC 987).